The chain runs to 248 residues: DNA/RNA-binding protein ALBA1 (248 aa).

A disordered region spans residues 217 to 248 (GRDGGYRGGNRGGSRSGFRGGRGGFRGGRALS). The segment covering 222 to 248 (YRGGNRGGSRSGFRGGRGGFRGGRALS) has biased composition (gly residues).

The protein belongs to the histone-like Alba family. As to quaternary structure, may form homodimers. Identified in a TARE6-associated complex consisting of over 30 proteins and including ALBA1, ALBA2 and ALBA4; the complex binds to the non-coding subtelomeric repeat region TARE6.

It localises to the nucleus. Its subcellular location is the chromosome. It is found in the telomere. The protein localises to the cytoplasm. Functionally, possesses DNA- and RNA-binding activities. During the asexual blood stages binds to a sub-population of mature mRNAs and regulates the timing of their translation. Binds to DNA with relaxed sequence specificity. Associates with the subtelomeric TARE6 repeats. The sequence is that of DNA/RNA-binding protein ALBA1 from Plasmodium falciparum (isolate 3D7).